The primary structure comprises 403 residues: cAMP-dependent protein kinase regulatory subunit (403 aa).

Residues 1–155 (MADYTIPSEL…RIQASIGNNF (155 aa)) are dimerization and phosphorylation. The segment at 79–125 (YAYSTDDGFGTEDDDDDDDDEDDEAAIPPPVVNRGRRTSVSAESMAP) is disordered. The segment covering 87-103 (FGTEDDDDDDDDEDDEA) has biased composition (acidic residues). At serine 117 the chain carries Phosphoserine. Residues 156–278 (LFRN…EEVP), glutamate 226, arginine 235, 279–403 (LLSS…PGEH), glutamate 349, and arginine 358 contribute to the 3',5'-cyclic AMP site.

The protein belongs to the cAMP-dependent kinase regulatory chain family. In terms of assembly, tetramer, composed of 2 regulatory (R) and 2 catalytic (C) subunits. In the presence of cAMP it dissociates into 2 active monomeric C subunits and an R dimer that binds four cAMP molecules.

In Blastocladiella emersonii (Aquatic fungus), this protein is cAMP-dependent protein kinase regulatory subunit (PKAR).